We begin with the raw amino-acid sequence, 3527 residues long: BEACH domain-containing protein A2 (3527 aa).

Disordered stretches follow at residues 25–46, 385–423, and 454–490; these read AGEAISDPTTPPSSSQASPSSS, SSPHKNRGSNDSKKQPPLSLKTRQNDDSEKQQSLSLNSR, and ESSGTSTSLLSQTKLTGYSRRQTPSANNRYDEPCEQG. Positions 28–46 are enriched in low complexity; that stretch reads AISDPTTPPSSSQASPSSS. Residues 455–469 are compositionally biased toward low complexity; it reads SSGTSTSLLSQTKLT. Over residues 472-481 the composition is skewed to polar residues; sequence SRRQTPSANN. LRR repeat units follow at residues 1447 to 1470, 1499 to 1522, 1542 to 1565, 1566 to 1588, and 2001 to 2024; these read KLESGQTTISMSPTEIIPENNYED, FSHLSELEMGDNPVETSNCIVLSN, SIQIASLGFLENLISILWYRSHNL, AILRQINLVKHLLVTLQRGDVEV, and SSEMKSLDLTGSSSQVQPIDSRSS. Disordered regions lie at residues 1992–2023 and 2046–2081; these read GDHVGSVSASSEMKSLDLTGSSSQVQPIDSRS and IPSPSKSSTISTPHPSHISVSEFDASSDQSSGSQGS. Polar residues predominate over residues 1998-2020; the sequence is VSASSEMKSLDLTGSSSQVQPID. LRR repeat units lie at residues 2128–2151, 2221–2247, and 2313–2336; these read TEQIKAVQALESILEMLPLYVDPE, LLSILQLANKDGRVEEVTSSGKGLLSI, and VSAVLQLLVANKNIILCPSNLDTD. Positions 2658–2680 are disordered; that stretch reads VNTDEKSETGSPIKSSSGKMDEI. The span at 2666–2675 shows a compositional bias: polar residues; it reads TGSPIKSSSG. Residues 2704–2871 enclose the BEACH-type PH domain; the sequence is EHLEKIRFRY…EREEVFRNLL (168 aa). One can recognise a BEACH domain in the interval 2896-3188; the sequence is GSRLFKLMAK…QLFQKPHVKR (293 aa). WD repeat units follow at residues 3272 to 3311, 3322 to 3361, 3410 to 3451, and 3483 to 3522; these read HEGNQIQCAGVSHDGRIVVTGAEDGLVSVWRVSKDGPRGS, AHTAKVICLRVSQPYMMIASSSDDCTVIIWDLSSLSFVRQ, DLIV…DPVS, and FHKQPVTSLHLTTDLKQLLSGDSAGHLLSWTVPDEILKAS.

The protein is BEACH domain-containing protein A2 of Arabidopsis thaliana (Mouse-ear cress).